A 150-amino-acid polypeptide reads, in one-letter code: NADH-quinone oxidoreductase subunit A (150 aa).

Helical transmembrane passes span 14–34, 70–90, and 98–118; these read WAFAVFLIGALGLCSLMLLGA, LVAMFFVIFDVEALFLYAWAV, and LGFIEAAVFIAILLAGLFYLV.

Belongs to the complex I subunit 3 family. In terms of assembly, NDH-1 is composed of 13 different subunits. Subunits NuoA, H, J, K, L, M, N constitute the membrane sector of the complex.

It is found in the cell inner membrane. The catalysed reaction is a quinone + NADH + 5 H(+)(in) = a quinol + NAD(+) + 4 H(+)(out). Functionally, NDH-1 shuttles electrons from NADH, via FMN and iron-sulfur (Fe-S) centers, to quinones in the respiratory chain. The immediate electron acceptor for the enzyme in this species is believed to be ubiquinone. Couples the redox reaction to proton translocation (for every two electrons transferred, four hydrogen ions are translocated across the cytoplasmic membrane), and thus conserves the redox energy in a proton gradient. In Proteus mirabilis (strain HI4320), this protein is NADH-quinone oxidoreductase subunit A.